The following is a 181-amino-acid chain: Ribosome maturation factor RimP (181 aa).

The protein belongs to the RimP family.

It localises to the cytoplasm. Functionally, required for maturation of 30S ribosomal subunits. The sequence is that of Ribosome maturation factor RimP from Sphingopyxis alaskensis (strain DSM 13593 / LMG 18877 / RB2256) (Sphingomonas alaskensis).